The following is a 120-amino-acid chain: MVHMHITAWALGLILFFVAYSLYSAGRKGKGVHMGLRLMYIIIIVTGVWLYLDQTIVDKSYHMWYGLKMLAGILVIAGMEMVLVKMSKNKATGAFWGLFIIALVAVFYLGLKLPIGWQVF.

Transmembrane regions (helical) follow at residues 6–26 (ITAWALGLILFFVAYSLYSAG), 32–52 (VHMGLRLMYIIIIVTGVWLYL), 64–84 (WYGLKMLAGILVIAGMEMVLV), and 91–111 (ATGAFWGLFIIALVAVFYLGL).

Belongs to the UPF0344 family.

Its subcellular location is the cell membrane. This chain is UPF0344 protein BCAH187_A1308, found in Bacillus cereus (strain AH187).